A 429-amino-acid polypeptide reads, in one-letter code: Cytochrome P450 BJ-3 (429 aa).

C376 contributes to the heme binding site.

It belongs to the cytochrome P450 family. Requires heme as cofactor.

Cytochromes P450 are a group of heme-thiolate monooxygenases. They oxidize a variety of structurally unrelated compounds, including steroids, fatty acids, and xenobiotics. The polypeptide is Cytochrome P450 BJ-3 (cyp114) (Bradyrhizobium diazoefficiens (strain JCM 10833 / BCRC 13528 / IAM 13628 / NBRC 14792 / USDA 110)).